Consider the following 469-residue polypeptide: Mitochondrial adenyl nucleotide antiporter SLC25A25 (469 aa).

The interval 1–165 (MLCLCLYVPI…LYWKHSTIFD (165 aa)) is regulatory N-terminal domain. At 1–189 (MLCLCLYVPI…ERQTGMWWRH (189 aa)) the chain is on the mitochondrial intermembrane side. 3 consecutive EF-hand domains span residues 47-80 (TYRQ…QDHE), 78-113 (DHEK…LGVK), and 114-149 (ISEQ…HPVE). The Ca(2+) site is built by Asp60, Asp62, Asp64, Gln66, and Glu71. The tract at residues 151-160 (IPEIILYWKH) is linker region. The tract at residues 166 to 469 (VGENLTVPDE…LKITLGVQSR (304 aa)) is C-terminal transmembrane transporter domain. Solcar repeat units lie at residues 184–270 (GMWW…MKRL), 278–363 (LRIH…LKNT), and 375–463 (PGVF…LKIT). The helical transmembrane segment at 190-207 (LVAGGGAGAVSRTCTAPL) threads the bilayer. The Mitochondrial matrix segment spans residues 208-244 (DRLKVLMQVHASRSNNMCIIGGFTQMIREGGAKSLWR). Residues 245–264 (GNGINVLKIAPESAIKFMAY) form a helical membrane-spanning segment. Topologically, residues 265-287 (EQMKRLVGSDQETLRIHERLVAG) are mitochondrial intermembrane. Residues 288-301 (SLAGAIAQSSIYPM) traverse the membrane as a helical segment. Residues 302-337 (EVLKTRMALRKTGQYSGMLDCAKRILAKEGVAAFYK) lie on the Mitochondrial matrix side of the membrane. The chain crosses the membrane as a helical span at residues 338–357 (GYIPNMLGIIPYAGIDLAVY). At 358–380 (ETLKNTWLQRYAVNSADPGVFVL) the chain is on the mitochondrial intermembrane side. Residues 381–398 (LACGTISSTCGQLASYPL) traverse the membrane as a helical segment. Residues 399 to 437 (ALVRTRMQAQASIEGAPEVTMSSLFKQILRTEGAFGLYR) lie on the Mitochondrial matrix side of the membrane. The helical transmembrane segment at 438–457 (GLAPNFMKVIPAVSISYVVY) threads the bilayer. The Mitochondrial intermembrane portion of the chain corresponds to 458–469 (ENLKITLGVQSR).

This sequence belongs to the mitochondrial carrier (TC 2.A.29) family. As to expression, mainly present in the liver and the skeletal muscle (at protein level).

The protein resides in the mitochondrion inner membrane. It catalyses the reaction Mg(2+)(out) + phosphate(in) + ATP(out) = Mg(2+)(in) + phosphate(out) + ATP(in). With respect to regulation, activated by an increase in cytosolic calcium levels that induce a conformational change of the N-terminal regulatory domain, uncapping the channel and allowing transport. In terms of biological role, electroneutral antiporter that most probably mediates the transport of adenyl nucleotides through the inner mitochondrial membrane. Originally identified as an ATP-magnesium/inorganic phosphate antiporter, it could have a broader specificity for adenyl nucleotides. By regulating the mitochondrial matrix adenyl nucleotide pool could adapt to changing cellular energetic demands and indirectly regulate adenyl nucleotide-dependent metabolic pathways. The protein is Mitochondrial adenyl nucleotide antiporter SLC25A25 of Rattus norvegicus (Rat).